The primary structure comprises 498 residues: MLSRSARCSRAVLFSAKRSLASQANTGANASANQVMVSKHVQDIDPEMYDILTKERKRQKHSITLIPSENFTSKSVMDLLGSEMQNKYSEGYPGERYYGGNQFIDMAESLCQKRALELYNLDPQLWGVNVQPLSGAPANLYAYSAVMETNDRLMGLDLPHGGHLSHGYQLPSGTKISYISKYFQTMPYHVDSQTGIIDYDFLSKTSKLFRPKVIVAGASAYSRVLDYKRFKEIADACGAYLMSDMAHISGLVAAGVTRSPFEYSDIVTTTTHKSLRGPRGAMIFYRKGVRKVTKKGKEVLYDLDKRINFSVFPGHQGGPHNHTISALAVALKQAATPEFKEYQAAVVENARIFGEELVKKGFELVSGGTDTHLILINLSNLGIDGARLETLLENINIAANKNTIPGDKSALFPSGLRVGTPAMTTRGFGPQEFAQVAAYIDRAVKLAIGIKSQESPDAKDARSKLASFKELCKESDQVKQLADEVYQWVGEFPVPGEL.

At Lys-273 the chain carries N6-(pyridoxal phosphate)lysine.

The protein belongs to the SHMT family. Homotetramer. Pyridoxal 5'-phosphate is required as a cofactor.

It localises to the mitochondrion. It carries out the reaction (6R)-5,10-methylene-5,6,7,8-tetrahydrofolate + glycine + H2O = (6S)-5,6,7,8-tetrahydrofolate + L-serine. It functions in the pathway one-carbon metabolism; tetrahydrofolate interconversion. In terms of biological role, interconversion of serine and glycine. This chain is Serine hydroxymethyltransferase, mitochondrial (SHM1), found in Kluyveromyces lactis (strain ATCC 8585 / CBS 2359 / DSM 70799 / NBRC 1267 / NRRL Y-1140 / WM37) (Yeast).